We begin with the raw amino-acid sequence, 183 residues long: Adenylate kinase (183 aa).

Residue 12–17 (GAGKGT) participates in ATP binding. The interval 32–61 (STGDLLRSEVAAGTALGQEAEAVMNRGELV) is NMP. AMP contacts are provided by residues Thr33, Arg38, 59-61 (ELV), 86-89 (GFPR), and Gln93. Residues 127–133 (ARGRDDD) are LID. An ATP-binding site is contributed by Arg128. Residues Arg130 and Arg141 each coordinate AMP. Position 169 (Gly169) interacts with ATP.

It belongs to the adenylate kinase family. As to quaternary structure, monomer.

It is found in the cytoplasm. It carries out the reaction AMP + ATP = 2 ADP. It functions in the pathway purine metabolism; AMP biosynthesis via salvage pathway; AMP from ADP: step 1/1. In terms of biological role, catalyzes the reversible transfer of the terminal phosphate group between ATP and AMP. Plays an important role in cellular energy homeostasis and in adenine nucleotide metabolism. The protein is Adenylate kinase of Parasynechococcus marenigrum (strain WH8102).